The following is a 571-amino-acid chain: Origin recognition complex subunit 5 (571 aa).

2 disordered regions span residues 90–142 and 404–430; these read DDEY…YDDD and QIYP…GRQL. 2 stretches are compositionally biased toward low complexity: residues 107–133 and 407–416; these read NNNN…NNND and PPQQVPQQQK. Basic and acidic residues predominate over residues 417–428; that stretch reads QQEKEKEKEKGR.

Belongs to the ORC1 family. As to quaternary structure, ORC is composed of six subunits.

Its subcellular location is the nucleus. Component of the origin recognition complex (ORC) that binds origins of replication. DNA-binding is ATP-dependent, however specific DNA sequences that define origins of replication have not been identified so far. ORC is required to assemble the pre-replication complex necessary to initiate DNA replication. In Dictyostelium discoideum (Social amoeba), this protein is Origin recognition complex subunit 5 (orcE).